A 154-amino-acid chain; its full sequence is Peptide methionine sulfoxide reductase MsrB (154 aa).

Residues 28–150 form the MsrB domain; the sequence is DQQWREQLSE…NSVSLIFNKI (123 aa). Residues cysteine 67, cysteine 70, cysteine 116, and cysteine 119 each contribute to the Zn(2+) site. Cysteine 139 functions as the Nucleophile in the catalytic mechanism.

The protein belongs to the MsrB Met sulfoxide reductase family. Zn(2+) serves as cofactor.

It carries out the reaction L-methionyl-[protein] + [thioredoxin]-disulfide + H2O = L-methionyl-(R)-S-oxide-[protein] + [thioredoxin]-dithiol. This Vibrio vulnificus (strain YJ016) protein is Peptide methionine sulfoxide reductase MsrB.